The primary structure comprises 256 residues: 5-keto-4-deoxy-D-glucarate aldolase (256 aa).

Residue H50 is the Proton acceptor of the active site. A substrate-binding site is contributed by Q151. Residue E153 coordinates Mg(2+). Residues S178 and D179 each coordinate substrate. Mg(2+) is bound at residue D179.

This sequence belongs to the HpcH/HpaI aldolase family. KDGluc aldolase subfamily. In terms of assembly, homohexamer; trimer of dimers. Requires Mg(2+) as cofactor.

The catalysed reaction is 5-dehydro-4-deoxy-D-glucarate = 2-hydroxy-3-oxopropanoate + pyruvate. It catalyses the reaction 2-dehydro-3-deoxy-D-glucarate = 2-hydroxy-3-oxopropanoate + pyruvate. Its pathway is carbohydrate acid metabolism; galactarate degradation; D-glycerate from galactarate: step 2/3. Functionally, catalyzes the reversible retro-aldol cleavage of both 5-keto-4-deoxy-D-glucarate and 2-keto-3-deoxy-D-glucarate to pyruvate and tartronic semialdehyde. This chain is 5-keto-4-deoxy-D-glucarate aldolase, found in Salmonella arizonae (strain ATCC BAA-731 / CDC346-86 / RSK2980).